The following is a 106-amino-acid chain: Putative double-stranded DNA mimic protein VV1_3059 (106 aa).

It belongs to the putative dsDNA mimic protein family.

Its function is as follows. May act as a double-stranded DNA (dsDNA) mimic. Probably regulates the activity of a dsDNA-binding protein. This Vibrio vulnificus (strain CMCP6) protein is Putative double-stranded DNA mimic protein VV1_3059.